Here is a 302-residue protein sequence, read N- to C-terminus: F-box protein SKIP19 (302 aa).

One can recognise an F-box domain in the interval 16–63 (STNWTELPPELTSAILHRLGAIEILENAQKVCRSWRRVCKDPSMWRKI).

As to quaternary structure, part of a SCF (ASK-cullin-F-box) protein ligase complex. Interacts with CUL1 and SPK1B/ASK2.

The protein localises to the nucleus. Its pathway is protein modification; protein ubiquitination. Functionally, component of SCF(ASK-cullin-F-box) E3 ubiquitin ligase complexes, which may mediate the ubiquitination and subsequent proteasomal degradation of target proteins. This chain is F-box protein SKIP19 (SKIP19), found in Arabidopsis thaliana (Mouse-ear cress).